Consider the following 137-residue polypeptide: Large ribosomal subunit protein uL16 (137 aa).

It belongs to the universal ribosomal protein uL16 family. In terms of assembly, part of the 50S ribosomal subunit.

Binds 23S rRNA and is also seen to make contacts with the A and possibly P site tRNAs. The sequence is that of Large ribosomal subunit protein uL16 from Methylocella silvestris (strain DSM 15510 / CIP 108128 / LMG 27833 / NCIMB 13906 / BL2).